The chain runs to 613 residues: Chaperone protein DnaK (613 aa).

Residues 579-613 (MYQSASSTTQTGSGNQNSSKQENDKTVDAEYKEKS) form a disordered region. The segment covering 581-597 (QSASSTTQTGSGNQNSS) has biased composition (low complexity). Basic and acidic residues predominate over residues 599–613 (QENDKTVDAEYKEKS).

This sequence belongs to the heat shock protein 70 family.

Its function is as follows. Acts as a chaperone. The chain is Chaperone protein DnaK from Thermoplasma volcanium (strain ATCC 51530 / DSM 4299 / JCM 9571 / NBRC 15438 / GSS1).